Consider the following 701-residue polypeptide: Elongation factor G (701 aa).

A tr-type G domain is found at 11-287 (NKVRNIGIMA…AVVDYLPSPL (277 aa)). Residues 20–27 (AHIDAGKT), 84–88 (DTPGH), and 138–141 (NKMD) contribute to the GTP site.

It belongs to the TRAFAC class translation factor GTPase superfamily. Classic translation factor GTPase family. EF-G/EF-2 subfamily.

It is found in the cytoplasm. In terms of biological role, catalyzes the GTP-dependent ribosomal translocation step during translation elongation. During this step, the ribosome changes from the pre-translocational (PRE) to the post-translocational (POST) state as the newly formed A-site-bound peptidyl-tRNA and P-site-bound deacylated tRNA move to the P and E sites, respectively. Catalyzes the coordinated movement of the two tRNA molecules, the mRNA and conformational changes in the ribosome. This is Elongation factor G from Mycobacterium sp. (strain JLS).